A 66-amino-acid polypeptide reads, in one-letter code: ATP synthase subunit c (66 aa).

The next 2 helical transmembrane spans lie at Leu-3–Met-23 and Ile-45–Ile-65.

The protein belongs to the ATPase C chain family. F-type ATPases have 2 components, F(1) - the catalytic core - and F(0) - the membrane proton channel. F(1) has five subunits: alpha(3), beta(3), gamma(1), delta(1), epsilon(1). F(0) has three main subunits: a(1), b(2) and c(10-14). The alpha and beta chains form an alternating ring which encloses part of the gamma chain. F(1) is attached to F(0) by a central stalk formed by the gamma and epsilon chains, while a peripheral stalk is formed by the delta and b chains.

It is found in the cell membrane. In terms of biological role, f(1)F(0) ATP synthase produces ATP from ADP in the presence of a proton or sodium gradient. F-type ATPases consist of two structural domains, F(1) containing the extramembraneous catalytic core and F(0) containing the membrane proton channel, linked together by a central stalk and a peripheral stalk. During catalysis, ATP synthesis in the catalytic domain of F(1) is coupled via a rotary mechanism of the central stalk subunits to proton translocation. Functionally, key component of the F(0) channel; it plays a direct role in translocation across the membrane. A homomeric c-ring of between 10-14 subunits forms the central stalk rotor element with the F(1) delta and epsilon subunits. The sequence is that of ATP synthase subunit c (atpE) from Streptococcus oralis.